The following is a 1782-amino-acid chain: Vitellogenin (1782 aa).

The first 15 residues, 1 to 15 (MKLFVLAAIIAAVSS), serve as a signal peptide directing secretion. The Vitellogenin domain maps to 34 to 812 (WQVGKQYRYE…SEDSLLPKDF (779 aa)). Disordered stretches follow at residues 333 to 367 (HYESSSSSSSSESHEFNFPEQHEHPHQSNQRSRRS) and 379 to 406 (VLKKRNSESSSGSSSSSADSSSTYINDD). Basic and acidic residues predominate over residues 344 to 358 (ESHEFNFPEQHEHPH). Over residues 386-400 (ESSSGSSSSSADSSS) the composition is skewed to low complexity. N-linked (GlcNAc...) asparagine glycans are attached at residues asparagine 569, asparagine 587, asparagine 1357, asparagine 1463, and asparagine 1596. A VWFD domain is found at 1449 to 1638 (PYCSIDGTRI…AYSLNEENSD (190 aa)). Residues cysteine 1451 and cysteine 1602 are joined by a disulfide bond.

Heterotetramer of two heavy and two light chains. Glycosylated and phosphorylated. In terms of tissue distribution, detected in oocytes (at protein level). Produced by the fat body, where it is cleaved before being secreted into hemolymph. Sequestered then by a single class of receptor mediated endocytosis in the ovary.

The protein localises to the secreted. Its subcellular location is the cytoplasm. It localises to the cytoplasmic granule. Precursor of the egg-yolk proteins that are sources of nutrients during embryonic development. The polypeptide is Vitellogenin (VG) (Bombyx mori (Silk moth)).